The chain runs to 407 residues: Serine/threonine transporter SstT (407 aa).

9 consecutive transmembrane segments (helical) span residues 10–30 (AKGNLIIQICAGIALGILIGI), 42–62 (LGILFTSALKAIAPMLVFILI), 81–101 (IIILYIVGTFLASACAILANF), 141–161 (ALSSGNYLGILTWAIAGGAAL), 179–199 (VLKIVKFVVKLAPFGIFGLVA), 218–238 (ILLVATMLFVTFVINALIVFF), 245–267 (FPLIFICLRHSAFFAFFTRSSAA), 288–308 (ISIPLGATINMAGAAVTIAIL), and 316–336 (VGIEISLLQAFLLSIIATFAA).

The protein belongs to the dicarboxylate/amino acid:cation symporter (DAACS) (TC 2.A.23) family.

Its subcellular location is the cell inner membrane. It carries out the reaction L-serine(in) + Na(+)(in) = L-serine(out) + Na(+)(out). The catalysed reaction is L-threonine(in) + Na(+)(in) = L-threonine(out) + Na(+)(out). Functionally, involved in the import of serine and threonine into the cell, with the concomitant import of sodium (symport system). This chain is Serine/threonine transporter SstT, found in Campylobacter jejuni subsp. doylei (strain ATCC BAA-1458 / RM4099 / 269.97).